A 345-amino-acid chain; its full sequence is Anthranilate phosphoribosyltransferase (345 aa).

5-phospho-alpha-D-ribose 1-diphosphate is bound by residues glycine 80, 83 to 84, threonine 88, 90 to 93, 108 to 116, and serine 120; these read GD, NIST, and KHGNRSVTS. Anthranilate is bound at residue glycine 80. Serine 92 provides a ligand contact to Mg(2+). Residue asparagine 111 participates in anthranilate binding. Arginine 166 is an anthranilate binding site. Residues aspartate 229 and glutamate 230 each contribute to the Mg(2+) site.

The protein belongs to the anthranilate phosphoribosyltransferase family. In terms of assembly, homodimer. Requires Mg(2+) as cofactor.

It carries out the reaction N-(5-phospho-beta-D-ribosyl)anthranilate + diphosphate = 5-phospho-alpha-D-ribose 1-diphosphate + anthranilate. Its pathway is amino-acid biosynthesis; L-tryptophan biosynthesis; L-tryptophan from chorismate: step 2/5. In terms of biological role, catalyzes the transfer of the phosphoribosyl group of 5-phosphorylribose-1-pyrophosphate (PRPP) to anthranilate to yield N-(5'-phosphoribosyl)-anthranilate (PRA). This is Anthranilate phosphoribosyltransferase from Chlorobium phaeobacteroides (strain BS1).